The sequence spans 354 residues: Probable butyrate kinase 2 (354 aa).

This sequence belongs to the acetokinase family.

The protein localises to the cytoplasm. The catalysed reaction is butanoate + ATP = butanoyl phosphate + ADP. This is Probable butyrate kinase 2 from Caldanaerobacter subterraneus subsp. tengcongensis (strain DSM 15242 / JCM 11007 / NBRC 100824 / MB4) (Thermoanaerobacter tengcongensis).